The chain runs to 81 residues: Large ribosomal subunit protein bL31 (81 aa).

4 residues coordinate Zn(2+): Cys-16, Cys-18, Cys-36, and Cys-39.

Belongs to the bacterial ribosomal protein bL31 family. Type A subfamily. Part of the 50S ribosomal subunit. It depends on Zn(2+) as a cofactor.

In terms of biological role, binds the 23S rRNA. This chain is Large ribosomal subunit protein bL31, found in Rhodopirellula baltica (strain DSM 10527 / NCIMB 13988 / SH1).